The primary structure comprises 275 residues: Shikimate dehydrogenase (NADP(+)) (275 aa).

Shikimate is bound by residues 16 to 18 and Thr63; that span reads SKS. The active-site Proton acceptor is the Lys67. Residues Asn88 and Asp104 each contribute to the shikimate site. NADP(+) is bound by residues 129–133, 153–158, and Met219; these read GAGGA and NRTVAR. Tyr221 is a binding site for shikimate. Gly243 is an NADP(+) binding site.

This sequence belongs to the shikimate dehydrogenase family. Homodimer.

The catalysed reaction is shikimate + NADP(+) = 3-dehydroshikimate + NADPH + H(+). Its pathway is metabolic intermediate biosynthesis; chorismate biosynthesis; chorismate from D-erythrose 4-phosphate and phosphoenolpyruvate: step 4/7. In terms of biological role, involved in the biosynthesis of the chorismate, which leads to the biosynthesis of aromatic amino acids. Catalyzes the reversible NADPH linked reduction of 3-dehydroshikimate (DHSA) to yield shikimate (SA). The chain is Shikimate dehydrogenase (NADP(+)) from Marinobacter nauticus (strain ATCC 700491 / DSM 11845 / VT8) (Marinobacter aquaeolei).